Reading from the N-terminus, the 1041-residue chain is Protein EGT2 (1041 aa).

The N-terminal stretch at 1–20 is a signal peptide; sequence MNKLLLHLVRVISILGLANA. Asn65, Asn103, Asn161, Asn175, Asn249, Asn332, Asn401, Asn435, Asn465, Asn485, Asn506, Asn526, Asn544, and Asn556 each carry an N-linked (GlcNAc...) asparagine glycan. Residues 388–410 form a disordered region; sequence SSSSISLSAPSSSNSTFTTPSSS. Copy 1 of the repeat occupies 457–492; that stretch reads SSTLSYTSNVTISVSSATQHTTTPSYVSNSTTLSSS. Residues 457 to 962 are 9 X approximate repeats; the sequence is SSTLSYTSNV…TLKTSTFQKA (506 aa). Repeat copies occupy residues 577–606 and 613–647. N-linked (GlcNAc...) asparagine glycans are attached at residues Asn635, Asn636, Asn657, and Asn709. Residues 716–745 form repeat 4; it reads TDKSDTYSVISSTESAQVTEYDSLLPISTL. The N-linked (GlcNAc...) asparagine glycan is linked to Asn756. 5 tandem repeats follow at residues 773–802, 811–840, 849–886, 887–924, and 925–962. Gly1020 carries GPI-anchor amidated glycine lipidation. The propeptide at 1021-1041 is removed in mature form; it reads AAGQLTIRIGSLLLGLISFLL.

The GPI-anchor is attached to the protein in the endoplasmic reticulum and serves to target the protein to the cell surface. There, the glucosamine-inositol phospholipid moiety is cleaved off and the GPI-modified mannoprotein is covalently attached via its lipidless GPI glycan remnant to the 1,6-beta-glucan of the outer cell wall layer.

Its subcellular location is the secreted. The protein resides in the cell wall. It localises to the membrane. In terms of biological role, seems to be involved in the correct timing of cell separation after cytokinesis, as separation of mutant daughter cells is delayed. Could either be an enzyme necessary for glucans-degradation of the cell wall at the neck region between mother and daughter cells or a regulatory protein controlling this metabolic step. This Saccharomyces cerevisiae (strain ATCC 204508 / S288c) (Baker's yeast) protein is Protein EGT2 (EGT2).